A 689-amino-acid polypeptide reads, in one-letter code: MPRTPKNQNLEQNTQTQSLTDLVYPESTGIPVPEYLGTVDKLPDNTEEVPQPKRRGRKPNPKTKARKEPALEQNVQAETEPEFQEKKQPVDGIAAAEKRLAEQYGVANIDAIAEPIYTGEQNYKPAESTEENAFVSENTSEAVIPQNGDMAQAQAENQGEVATDQNADPNAQQQGEAQAQNGEGQDDRRFNNQNGKFNKFNKNNKFNKNNRNNRNFQQQEEFVDDSATLPAPGSEAILKAKENWLKFRKLSMSELQELAVQKEVDFRRMRKQSLNYILQSLENEGNIIYTEGVLEVTPQGHGFLRMPDQNYQTSADDVYVSQNLIRKFNLKIGDTIEGLVRTPRDQDKYFSMRRIDRVNFEEPDKMRRRVAFEYLTPIHPEEKIHLEWNETEYSTRIMDLFSPIGKGQRSIILAPPRTGKTVLLQNVTRAIAKNHPEIILITLLIDERPEEVTEMRDIITDIKEKAAEKGIEIKAEVVASTFDEPPEHHTRVANMVLEKAKRLVESQKDVVILLDSITRFARANNVVIPHSGKILSGGVDANAMQFPKKFFGAARKIQDKIRTVKNEDGTISEEVQKNGSLTIIGTALIETGSRMDEVIFEEFKGTGNMELVLDRRIAEKRIWPAIDVFKSGTRKEERLLTLLEQNAAWNFRRGSQNETETGIMENLLKLMSKLKTNAELLAVLSKPKV.

Positions 1-20 are enriched in polar residues; that stretch reads MPRTPKNQNLEQNTQTQSLT. Disordered regions lie at residues 1-90 and 151-213; these read MPRT…KQPV and AQAQ…NRNN. Residues 52 to 65 are compositionally biased toward basic residues; sequence PKRRGRKPNPKTKA. Composition is skewed to low complexity over residues 170-183 and 191-213; these read NAQQ…QNGE and NNQN…NRNN. Residues 287–362 enclose the Rho RNA-BD domain; the sequence is IIYTEGVLEV…RRIDRVNFEE (76 aa). ATP is bound by residues 405–410, 417–422, and arginine 448; these read GKGQRS and RTGKTV.

This sequence belongs to the Rho family. In terms of assembly, homohexamer. The homohexamer assembles into an open ring structure.

Facilitates transcription termination by a mechanism that involves Rho binding to the nascent RNA, activation of Rho's RNA-dependent ATPase activity, and release of the mRNA from the DNA template. The sequence is that of Transcription termination factor Rho from Fibrobacter succinogenes (strain ATCC 19169 / S85).